A 60-amino-acid polypeptide reads, in one-letter code: Large ribosomal subunit protein uL30 (60 aa).

This sequence belongs to the universal ribosomal protein uL30 family. Part of the 50S ribosomal subunit.

The protein is Large ribosomal subunit protein uL30 of Leptothrix cholodnii (strain ATCC 51168 / LMG 8142 / SP-6) (Leptothrix discophora (strain SP-6)).